Reading from the N-terminus, the 799-residue chain is MIRLSKRSVSTLLRSGNQSFRIAAAASTSRSSPSATDVKRSDTESRWYSSLTNGQSKNSGSFAQLNMKTNWFMGYRNESSAAASDSSSQAPPPAEKFEYQAEVSRLMDLIVNSLYSNKEVFLRELISNASDALDKLRYLSVTNPELSKDAPDLDIRIYADKENGIITLTDSGIGMTRQELVDCLGTIAQSGTAKFMKALKDSKDAGGDNNLIGQFGVGFYSAFLVADRVIVSTKSPKSDKQYVWEGEANSSSFTIQEDTDPQSLIPRGTRITLHLKQEAKNFADPERIQKLVKNYSQFVSFPIYTWQEKGYTKEVEVEDDPTETKKDDQDDQTEKKKKTKKVVERYWDWELTNETQPIWLRNPKEVTTAEYNEFYRKAFNEYLDPLASSHFTTEGEVEFRSILYVPPVSPSGKDDIVNQKTKNIRLYVKRVFISDDFDGELFPRYLSFVKGVVDSHDLPLNVSREILQESRIVRIMKKRLVRKAFDMILGISLSENREDYEKFWDNFGKHLKLGCIEDRENHKRIAPLLRFFSSQSENDMISLDEYVENMKPEQKAIYFIASDSITSAKNAPFLEKMLEKGLEVLYLVEPIDEVAVQSLKAYKEKDFVDISKEDLDLGDKNEEKEAAVKKEFGQTCDWIKKRLGDKVASVQISNRLSSSPCVLVSGKFGWSANMERLMKAQSTGDTISLDYMKGRRVFEINPDHSIIKNINAAYNSNPNDEDAMRAIDLMYDAALVSSGFTPDNPAELGGKIYEMMDVALSGKWSSPEVQPQQQQMAHSHDAETFEAEVVEPVEVDGKK.

The transit peptide at 1–48 (MIRLSKRSVSTLLRSGNQSFRIAAAASTSRSSPSATDVKRSDTESRWY) directs the protein to the mitochondrion. The segment covering 23–35 (AAAASTSRSSPSA) has biased composition (low complexity). The disordered stretch occupies residues 23-61 (AAAASTSRSSPSATDVKRSDTESRWYSSLTNGQSKNSGS). Residues 46 to 61 (RWYSSLTNGQSKNSGS) show a composition bias toward polar residues. ATP contacts are provided by residues E124, N128, D170, M175, 190–191 (SG), 214–219 (QFGVGF), and T269. The tract at residues 314-337 (EVEVEDDPTETKKDDQDDQTEKKK) is disordered. Residues 322–334 (TETKKDDQDDQTE) show a composition bias toward basic and acidic residues. R464 contacts ATP. The segment covering 766 to 777 (SPEVQPQQQQMA) has biased composition (polar residues). Residues 766-799 (SPEVQPQQQQMAHSHDAETFEAEVVEPVEVDGKK) form a disordered region. Over residues 784–799 (TFEAEVVEPVEVDGKK) the composition is skewed to acidic residues.

It belongs to the heat shock protein 90 family. In terms of assembly, interacts with P23-1.

The protein resides in the mitochondrion. Its function is as follows. Molecular chaperone which stabilizes unfolding protein intermediates and functions as a folding molecular chaperone that assists the non-covalent folding of proteins in an ATP-dependent manner. The chain is Heat shock protein 90-6, mitochondrial from Arabidopsis thaliana (Mouse-ear cress).